A 172-amino-acid polypeptide reads, in one-letter code: Sec-independent protein translocase protein TatB (172 aa).

A helical transmembrane segment spans residues 1–21 (MIDLGISKLALIGAVALVVIG). Residues 97-129 (GDPASRQTATQAAEWRPAPAKSRNGRNSWRNKQ) are disordered.

It belongs to the TatB family. In terms of assembly, the Tat system comprises two distinct complexes: a TatABC complex, containing multiple copies of TatA, TatB and TatC subunits, and a separate TatA complex, containing only TatA subunits. Substrates initially bind to the TatABC complex, which probably triggers association of the separate TatA complex to form the active translocon.

The protein localises to the cell inner membrane. Part of the twin-arginine translocation (Tat) system that transports large folded proteins containing a characteristic twin-arginine motif in their signal peptide across membranes. Together with TatC, TatB is part of a receptor directly interacting with Tat signal peptides. TatB may form an oligomeric binding site that transiently accommodates folded Tat precursor proteins before their translocation. This Ralstonia nicotianae (strain ATCC BAA-1114 / GMI1000) (Ralstonia solanacearum) protein is Sec-independent protein translocase protein TatB.